The chain runs to 153 residues: Cytochrome c-554 (153 aa).

The N-terminal stretch at 1 to 20 is a signal peptide; sequence MRPIPALALTFSLVAMPALA. Gln-21 is modified (pyrrolidone carboxylic acid). Residues Met-37, Cys-142, Cys-145, and His-146 each coordinate heme c.

In terms of processing, binds 1 heme c group covalently per subunit.

It is found in the periplasm. Monoheme c-type cytochrome, that is particularly expressed when cells generate energy via aerobic respiration. The polypeptide is Cytochrome c-554 (cycF) (Cereibacter sphaeroides (strain ATCC 17023 / DSM 158 / JCM 6121 / CCUG 31486 / LMG 2827 / NBRC 12203 / NCIMB 8253 / ATH 2.4.1.) (Rhodobacter sphaeroides)).